The primary structure comprises 117 residues: Swarming motility protein SwrAA (117 aa).

The protein localises to the cytoplasm. Its function is as follows. Required for swarm cell differentiation. Plays a crucial role in regulating the degree of cell flagellation. The polypeptide is Swarming motility protein SwrAA (swrAA) (Bacillus subtilis (strain 168)).